The chain runs to 318 residues: Probable 3-hydroxyisobutyrate dehydrogenase-like 3, mitochondrial (318 aa).

NAD(+) is bound by residues 35 to 64 (TRIG…TVYA) and serine 129. Lysine 203 is an active-site residue. Lysine 271 lines the NAD(+) pocket.

It belongs to the HIBADH-related family. 3-hydroxyisobutyrate dehydrogenase subfamily.

The protein resides in the mitochondrion. The catalysed reaction is 3-hydroxy-2-methylpropanoate + NAD(+) = 2-methyl-3-oxopropanoate + NADH + H(+). The protein operates within amino-acid degradation; L-valine degradation. This is Probable 3-hydroxyisobutyrate dehydrogenase-like 3, mitochondrial from Arabidopsis thaliana (Mouse-ear cress).